The sequence spans 217 residues: Melanocortin-2 receptor accessory protein 2A (217 aa).

N-linked (GlcNAc...) asparagine glycosylation occurs at Asn-8. A helical membrane pass occupies residues 42-62 (IVIGFWVGLAVFVIFMFFVLT).

This sequence belongs to the MRAP family. As to quaternary structure, interacts with mc4r.

The protein resides in the cell membrane. The protein localises to the endoplasmic reticulum membrane. In terms of biological role, inhibitor of melanocortin receptor 4 (mc4r), a receptor involved in energy homeostasis. Plays a role during larval development in the control of energy homeostasis and body weight regulation by decreasing ligand-sensitivity of mc4r and mc4r-mediated generation of cAMP, leading to stimulate growth during larval development. Acts by stabilizing an inactive conformation of mc4r during embryonic development, when all the energy consumed is obtained from the yolk sac, possibly to speed the rapid maturation to the mobile free-feeding juvenile stage reached at 5 dpf. The protein is Melanocortin-2 receptor accessory protein 2A (mrap2a) of Danio rerio (Zebrafish).